A 396-amino-acid polypeptide reads, in one-letter code: Probable sugar efflux transporter (396 aa).

A run of 12 helical transmembrane segments spans residues 15-35 (VVTLAVAAFIFNTTEFVPVGL), 50-70 (VGIMLTIYAWVVALMSLPFML), 81-101 (LICLFVVFIASHVLSFLSWSF), 103-123 (VLVISRIGVAFAHAIFWSITA), 136-156 (AQALSLIATGTALAMVLGLPL), 170-190 (FFAIGIGALITLLCLIKLLPL), 209-229 (PALMSIYLLTVVVVTAHYTAY), 246-266 (FATALLLLLGGAGIIGSVIFG), 275-295 (TLVSTAIALLLVCLALLLPAA), 299-319 (IHLGVLSIFWGIAMMIIGLGM), 333-353 (VAMALFSGIFNIGIGAGALVG), and 364-384 (MIGYVGAVPAFAALIWSIIIF).

The protein belongs to the major facilitator superfamily. SotB (TC 2.A.1.2) family.

The protein resides in the cell inner membrane. Functionally, involved in the efflux of sugars. The physiological role may be the reduction of the intracellular concentration of toxic sugars or sugar metabolites. This chain is Probable sugar efflux transporter, found in Escherichia coli (strain SMS-3-5 / SECEC).